We begin with the raw amino-acid sequence, 118 residues long: Large ribosomal subunit protein uL18 (118 aa).

The disordered stretch occupies residues 1–20 (MISKPDKNKKRQRRHARVRS). Residues 7–20 (KNKKRQRRHARVRS) are compositionally biased toward basic residues.

Belongs to the universal ribosomal protein uL18 family. Part of the 50S ribosomal subunit; part of the 5S rRNA/L5/L18/L25 subcomplex. Contacts the 5S and 23S rRNAs.

Functionally, this is one of the proteins that bind and probably mediate the attachment of the 5S RNA into the large ribosomal subunit, where it forms part of the central protuberance. The polypeptide is Large ribosomal subunit protein uL18 (Pediococcus pentosaceus (strain ATCC 25745 / CCUG 21536 / LMG 10740 / 183-1w)).